A 209-amino-acid chain; its full sequence is COP9 signalosome complex subunit 8 (209 aa).

The region spanning Glu8–Phe179 is the PCI domain. Ser175 is modified (phosphoserine).

This sequence belongs to the CSN8 family. In terms of assembly, component of the CSN complex, composed of COPS1/GPS1, COPS2, COPS3, COPS4, COPS5, COPS6, COPS7 (COPS7A or COPS7B), COPS8 and COPS9 isoform 1. In the complex, it probably interacts directly with COPS3, COPS4 and COPS7 (COPS7A or COPS7B).

The protein localises to the cytoplasm. It is found in the nucleus. In terms of biological role, component of the COP9 signalosome complex (CSN), a complex involved in various cellular and developmental processes. The CSN complex is an essential regulator of the ubiquitin (Ubl) conjugation pathway by mediating the deneddylation of the cullin subunits of SCF-type E3 ligase complexes, leading to decrease the Ubl ligase activity of SCF-type complexes such as SCF, CSA or DDB2. The complex is also involved in phosphorylation of p53/TP53, c-jun/JUN, IkappaBalpha/NFKBIA, ITPK1 and IRF8/ICSBP, possibly via its association with CK2 and PKD kinases. CSN-dependent phosphorylation of TP53 and JUN promotes and protects degradation by the Ubl system, respectively. This Homo sapiens (Human) protein is COP9 signalosome complex subunit 8 (COPS8).